A 472-amino-acid chain; its full sequence is Violaxanthin de-epoxidase, chloroplastic (472 aa).

Disulfide bonds link Cys-133–Cys-151, Cys-138–Cys-145, Cys-157–Cys-174, Cys-161–Cys-170, Cys-189–Cys-196, and Cys-242–Cys-372. Residues Val-379–Phe-462 adopt a coiled-coil conformation.

This sequence belongs to the calycin superfamily. Lipocalin family. Disulfide bonds. Reduction of the disulfides results in loss of a rigid structure, a decrease in thermal stability of 15 degrees Celsius and a loss of activity.

The protein resides in the plastid. It localises to the chloroplast thylakoid membrane. The catalysed reaction is all-trans-violaxanthin + 2 L-ascorbate = all-trans-zeaxanthin + 2 L-dehydroascorbate + 2 H2O. Irreversibly inhibited by DTT and iodoacetamide at pH 5.7 or pH 5.2, but not at pH 7.2. Regulated through Ca(2+) gating of H(+) flux at the CFoH(+) channel. Requires the presence of lipids forming reverse hexagonal structures such as monogalactosyldiacylglyceride (MGDG) or phosphatidylethanolamine. A negative curvature elastic stress in the thylakoid lipid bilayer is required for VDE1 activity. In terms of biological role, part of the xanthophyll (or violaxanthin) cycle for controlling the concentration of zeaxanthin in chloroplasts. Catalyzes the two-step mono de-epoxidation reaction. Stereospecific for all-trans xanthophylls. Zeaxanthin induces the dissipation of excitation energy in the chlorophyll of the light-harvesting protein complex of photosystem II. This Spinacia oleracea (Spinach) protein is Violaxanthin de-epoxidase, chloroplastic.